Consider the following 658-residue polypeptide: Scarecrow-like protein 28 (658 aa).

Disordered regions lie at residues 43 to 85, 96 to 115, and 209 to 265; these read PCSS…TSGC, LATT…NNNR, and PAAV…NNNR. Residues 214 to 228 show a composition bias toward low complexity; sequence EASGGSSTSASSESR. The GRAS domain occupies 265–654; the sequence is RNDLQRDFEL…QPLYTISAWT (390 aa). A leucine repeat I (LRI) region spans residues 272 to 336; that stretch reads FELVNLLTGC…VARMWPHIFH (65 aa). A VHIID region spans residues 355-420; it reads LRFLNQVTPI…NPPHHVRITG (66 aa). Positions 386 to 390 match the VHIID motif; that stretch reads VHIID. Residues 430-462 form a leucine repeat II (LRII) region; that stretch reads ETGDRLHGFAEAMNLQFEFHPVVDRLEDVRLWM. Positions 471–563 are PFYRE; that stretch reads VAVNCVMQMH…EMLFGREIRN (93 aa). The segment at 566–654 is SAW; sequence ACEGSHRQER…QPLYTISAWT (89 aa).

This sequence belongs to the GRAS family. As to quaternary structure, interacts with SNRNP35 and CYP95. Expressed in roots and sepals.

The protein resides in the nucleus. In terms of biological role, probable transcription factor involved in plant development. This chain is Scarecrow-like protein 28 (SCL28), found in Arabidopsis thaliana (Mouse-ear cress).